The chain runs to 80 residues: RNA-binding protein Hfq (80 aa).

A Sm domain is found at D10–M70.

It belongs to the Hfq family. In terms of assembly, homohexamer.

Its function is as follows. RNA chaperone that binds small regulatory RNA (sRNAs) and mRNAs to facilitate mRNA translational regulation in response to envelope stress, environmental stress and changes in metabolite concentrations. Also binds with high specificity to tRNAs. This chain is RNA-binding protein Hfq, found in Agrobacterium fabrum (strain C58 / ATCC 33970) (Agrobacterium tumefaciens (strain C58)).